A 302-amino-acid chain; its full sequence is Sulfate adenylyltransferase subunit 2 (302 aa).

The tract at residues 280 to 302 (RQGRAIDHDQSGSMELKKRQGYF) is disordered.

This sequence belongs to the PAPS reductase family. CysD subfamily. As to quaternary structure, heterodimer composed of CysD, the smaller subunit, and CysN.

It catalyses the reaction sulfate + ATP + H(+) = adenosine 5'-phosphosulfate + diphosphate. It participates in sulfur metabolism; hydrogen sulfide biosynthesis; sulfite from sulfate: step 1/3. Its function is as follows. With CysN forms the ATP sulfurylase (ATPS) that catalyzes the adenylation of sulfate producing adenosine 5'-phosphosulfate (APS) and diphosphate, the first enzymatic step in sulfur assimilation pathway. APS synthesis involves the formation of a high-energy phosphoric-sulfuric acid anhydride bond driven by GTP hydrolysis by CysN coupled to ATP hydrolysis by CysD. The sequence is that of Sulfate adenylyltransferase subunit 2 from Vibrio atlanticus (strain LGP32) (Vibrio splendidus (strain Mel32)).